The chain runs to 132 residues: Small ribosomal subunit protein uS8 (132 aa).

Belongs to the universal ribosomal protein uS8 family. In terms of assembly, part of the 30S ribosomal subunit. Contacts proteins S5 and S12.

One of the primary rRNA binding proteins, it binds directly to 16S rRNA central domain where it helps coordinate assembly of the platform of the 30S subunit. The chain is Small ribosomal subunit protein uS8 from Streptococcus sanguinis (strain SK36).